A 301-amino-acid chain; its full sequence is Nucleotide-binding protein ELI_02120 (301 aa).

Residue 12–19 (GMSGAGKS) participates in ATP binding. 62–65 (DSRT) is a GTP binding site.

Belongs to the RapZ-like family.

Its function is as follows. Displays ATPase and GTPase activities. This chain is Nucleotide-binding protein ELI_02120, found in Erythrobacter litoralis (strain HTCC2594).